We begin with the raw amino-acid sequence, 94 residues long: Small ribosomal subunit protein bS18 (94 aa).

The span at 1–11 (MANERPTSQQR) shows a compositional bias: polar residues. The disordered stretch occupies residues 1-24 (MANERPTSQQRPAGGPRKRRPFQR).

Belongs to the bacterial ribosomal protein bS18 family. In terms of assembly, part of the 30S ribosomal subunit. Forms a tight heterodimer with protein bS6.

Functionally, binds as a heterodimer with protein bS6 to the central domain of the 16S rRNA, where it helps stabilize the platform of the 30S subunit. The protein is Small ribosomal subunit protein bS18 of Pelobacter propionicus (strain DSM 2379 / NBRC 103807 / OttBd1).